Consider the following 1790-residue polypeptide: Protein FAM186A (1790 aa).

Belongs to the FAM186 family.

This chain is Protein FAM186A (FAM186A), found in Mus musculus (Mouse).